The primary structure comprises 215 residues: Large ribosomal subunit protein uL4 (215 aa).

The tract at residues 46–72 (TAKSKNRAEVSGGGRKPWAQKGGGRAR) is disordered. The span at 56-71 (SGGGRKPWAQKGGGRA) shows a compositional bias: gly residues.

The protein belongs to the universal ribosomal protein uL4 family. In terms of assembly, part of the 50S ribosomal subunit.

Functionally, one of the primary rRNA binding proteins, this protein initially binds near the 5'-end of the 23S rRNA. It is important during the early stages of 50S assembly. It makes multiple contacts with different domains of the 23S rRNA in the assembled 50S subunit and ribosome. Its function is as follows. Forms part of the polypeptide exit tunnel. In Helicobacter pylori (strain Shi470), this protein is Large ribosomal subunit protein uL4.